A 524-amino-acid polypeptide reads, in one-letter code: Strychnine-10-hydroxylase (524 aa).

Residues 6-26 traverse the membrane as a helical segment; the sequence is LYIHTAILGLISLFLILHFVF. C466 contributes to the heme binding site.

Belongs to the cytochrome P450 family. Requires heme as cofactor.

Its subcellular location is the membrane. The enzyme catalyses strychnine + reduced [NADPH--hemoprotein reductase] + O2 = 10-hydroxystrychnine + oxidized [NADPH--hemoprotein reductase] + H2O + H(+). It participates in alkaloid biosynthesis. In terms of biological role, monooxygenase involved in the biosynthesis of curare monoterpene indole alkaloids (MIAs), natural products such as strychnine, a neurotoxic compound used as a pesticide to control rodents, and its pharmacologically active derivatives, including brucine, used to regulate blood pressure. Curare alkaloids act as animal glycine receptor antagonists. Catalyzes the conversion of strychnine to 10-OH strychnine. The polypeptide is Strychnine-10-hydroxylase (Strychnos nux-vomica (Poison nut)).